A 1376-amino-acid polypeptide reads, in one-letter code: Zinc finger MYM-type protein 2 (1376 aa).

Residues 30–53 are compositionally biased toward polar residues; sequence NVGNSFSGPPNPLVSRSSKFQNSS. Disordered stretches follow at residues 30–56 and 85–158; these read NVGN…SVED and TSSK…FSSS. Glycyl lysine isopeptide (Lys-Gly) (interchain with G-Cter in SUMO2) cross-links involve residues Lys48, Lys88, Lys98, and Lys104. Over residues 127–138 the composition is skewed to polar residues; the sequence is TNQGQEKSSSNF. Over residues 139–152 the composition is skewed to basic and acidic residues; the sequence is IERRPSETKNRTND. Glycyl lysine isopeptide (Lys-Gly) (interchain with G-Cter in SUMO2) cross-links involve residues Lys147, Lys253, and Lys297. The interval 269–304 is disordered; that stretch reads DVFQNGESAPHHNPDSWISQSASFPRNQKQQGVDSL. The span at 284–302 shows a compositional bias: polar residues; the sequence is SWISQSASFPRNQKQQGVD. Ser305 carries the phosphoserine modification. Residues Lys312, Lys324, Lys347, and Lys365 each participate in a glycyl lysine isopeptide (Lys-Gly) (interchain with G-Cter in SUMO2) cross-link. The segment at 326–362 adopts an MYM-type 1 zinc-finger fold; it reads VKVTCANCKKPLQKGQTAYQRKGSAHLFCSTTCLSSF. The segment at 368-408 adopts an MYM-type 2 zinc-finger fold; that stretch reads PKKLCVMCKKDITTMKGTIVAQVDSSESFQEFCSTSCLSLY. Glycyl lysine isopeptide (Lys-Gly) (interchain with G-Cter in SUMO2) cross-links involve residues Lys416, Lys440, Lys490, Lys502, Lys512, Lys528, and Lys531. 2 MYM-type zinc fingers span residues 420–455 and 462–501; these read NKSR…FNRY and IMNC…VTEY. The MYM-type 5 zinc finger occupies 532–569; the sequence is LTTCTGCRTQCRFFDMTQCIGPNGYMEPYCSTACMNSH. Residues Lys575, Lys602, Lys648, Lys657, Lys687, Lys699, and Lys708 each participate in a glycyl lysine isopeptide (Lys-Gly) (interchain with G-Cter in SUMO2) cross-link. The segment at 635–670 adopts an MYM-type 6 zinc-finger fold; the sequence is QLKCNYCKNSFCSKPEILEWENKVHQFCSKTCSDDY. 2 consecutive MYM-type zinc fingers follow at residues 722-757 and 763-798; these read RCVT…CKKF and KAAR…LLRF. Glycyl lysine isopeptide (Lys-Gly) (interchain with G-Cter in SUMO2) cross-links involve residues Lys763, Lys787, Lys811, and Lys828. Ser837 is subject to Phosphoserine. The interval 1027–1063 is disordered; that stretch reads VFGEEYEEQPRPRSKKKGTKRKAVSGYQSHDDSSDNS. Basic residues predominate over residues 1038 to 1049; it reads PRSKKKGTKRKA. Ser1063 bears the Phosphoserine mark. Thr1375 carries the post-translational modification Phosphothreonine.

Can form homodimers. May be a component of a BHC histone deacetylase complex that contains HDAC1, HDAC2, HMG20B/BRAF35, KDM1A, RCOR1/CoREST, PHF21A/BHC80, ZMYM2, ZNF217, ZMYM3, GSE1 and GTF2I. Interacts with FOXP1 and FOXP2. As to expression, low but widespread expression is detected in the developing kidney.

The protein resides in the nucleus. In terms of biological role, involved in the negative regulation of transcription. The protein is Zinc finger MYM-type protein 2 (Zmym2) of Mus musculus (Mouse).